A 166-amino-acid polypeptide reads, in one-letter code: Small ribosomal subunit protein uS5 (166 aa).

One can recognise an S5 DRBM domain in the interval 11–74; the sequence is LIEKLVSVKR…ENAKKNMVSV (64 aa).

The protein belongs to the universal ribosomal protein uS5 family. In terms of assembly, part of the 30S ribosomal subunit. Contacts proteins S4 and S8.

In terms of biological role, with S4 and S12 plays an important role in translational accuracy. Its function is as follows. Located at the back of the 30S subunit body where it stabilizes the conformation of the head with respect to the body. This chain is Small ribosomal subunit protein uS5, found in Francisella tularensis subsp. holarctica (strain LVS).